The chain runs to 187 residues: Adenine phosphoribosyltransferase (187 aa).

This sequence belongs to the purine/pyrimidine phosphoribosyltransferase family. As to quaternary structure, homodimer.

The protein localises to the cytoplasm. It catalyses the reaction AMP + diphosphate = 5-phospho-alpha-D-ribose 1-diphosphate + adenine. It participates in purine metabolism; AMP biosynthesis via salvage pathway; AMP from adenine: step 1/1. Catalyzes a salvage reaction resulting in the formation of AMP, that is energically less costly than de novo synthesis. This is Adenine phosphoribosyltransferase from Burkholderia pseudomallei (strain 668).